The primary structure comprises 178 residues: Ribosome maturation factor RimM (178 aa).

The PRC barrel domain occupies 100 to 178; that stretch reads TDGEYYWYQL…EMKVEWDADF (79 aa).

The protein belongs to the RimM family. In terms of assembly, binds ribosomal protein uS19.

The protein localises to the cytoplasm. Functionally, an accessory protein needed during the final step in the assembly of 30S ribosomal subunit, possibly for assembly of the head region. Essential for efficient processing of 16S rRNA. May be needed both before and after RbfA during the maturation of 16S rRNA. It has affinity for free ribosomal 30S subunits but not for 70S ribosomes. In Pseudomonas fluorescens (strain SBW25), this protein is Ribosome maturation factor RimM.